We begin with the raw amino-acid sequence, 359 residues long: DNA integrity scanning protein DisA (359 aa).

The region spanning 7–146 (DEVLRQTLAI…NRRYVLEGSD (140 aa)) is the DAC domain. Residues Gly-74, Leu-92, and 105 to 109 (TRHRT) contribute to the ATP site.

This sequence belongs to the DisA family. As to quaternary structure, homooctamer. Mg(2+) serves as cofactor.

It catalyses the reaction 2 ATP = 3',3'-c-di-AMP + 2 diphosphate. Participates in a DNA-damage check-point. DisA forms globular foci that rapidly scan along the chromosomes searching for lesions. In terms of biological role, also has diadenylate cyclase activity, catalyzing the condensation of 2 ATP molecules into cyclic di-AMP (c-di-AMP). c-di-AMP likely acts as a signaling molecule that may couple DNA integrity with a cellular process. In Kineococcus radiotolerans (strain ATCC BAA-149 / DSM 14245 / SRS30216), this protein is DNA integrity scanning protein DisA.